The chain runs to 397 residues: Yellow-related salivary protein LJM111 (397 aa).

Residues 1 to 18 form the signal peptide; sequence MKLFFFLYTFGLVQTIFG.

Belongs to the major royal jelly protein family. As to expression, salivary gland (at protein level).

Its subcellular location is the secreted. In terms of biological role, probably modulates blood feeding of sand flies on vertebrate species by binding and sequestering different mediators involved in the host response. Binds biogenic amines. Binds adrenaline and noradrenaline with high affinity. Binds serotonin. Binds dopamine and octopamine. Exhibits anti-inflammatory effects in the host: reduces IL17A, TNF-alpha (TNF) and IFN-gamma (IFNG) production by host lymph node cells, suppresses expression of MHC-II and CD86, reduces TNF-alpha production and increases IL10 production, in host bone marrow-derived dendritic cells (BMDCs) stimulated by lipopolysaccharides. Reduces pain in mouse mechanical hypernociception model. This is Yellow-related salivary protein LJM111 from Lutzomyia longipalpis (Sand fly).